Reading from the N-terminus, the 361-residue chain is Peptide chain release factor 1 (361 aa).

Glutamine 236 carries the post-translational modification N5-methylglutamine.

The protein belongs to the prokaryotic/mitochondrial release factor family. Post-translationally, methylated by PrmC. Methylation increases the termination efficiency of RF1.

It localises to the cytoplasm. Functionally, peptide chain release factor 1 directs the termination of translation in response to the peptide chain termination codons UAG and UAA. The chain is Peptide chain release factor 1 from Lactobacillus delbrueckii subsp. bulgaricus (strain ATCC BAA-365 / Lb-18).